Reading from the N-terminus, the 44-residue chain is Thymosin beta-4 (44 aa).

Basic and acidic residues-rich tracts occupy residues 1–25 and 33–44; these read MSDKPDMAEIEKFDKAKLKKTETQE and ETIEQEKQTSES. The segment at 1-44 is disordered; sequence MSDKPDMAEIEKFDKAKLKKTETQEKNPLPSKETIEQEKQTSES. Ser-2 is modified (N-acetylserine).

This sequence belongs to the thymosin beta family. As to expression, spleen, kidney, heart, and oocytes.

Its subcellular location is the cytoplasm. The protein localises to the cytoskeleton. Functionally, plays an important role in the organization of the cytoskeleton. Binds to and sequesters actin monomers (G actin) and therefore inhibits actin polymerization. In Xenopus laevis (African clawed frog), this protein is Thymosin beta-4 (tmsb4).